Here is a 50-residue protein sequence, read N- to C-terminus: Mast cell degranulating peptide (50 aa).

Positions 1–27 (MISMLRCTFFFVSVILITSYFVTPTMS) are cleaved as a signal peptide. An N6-formyllysine modification is found at K29. Residues C30 and C42 are joined by a disulfide bond. N6-formyllysine is present on residues K44 and K48. At N49 the chain carries Asparagine amide.

As to expression, expressed by the venom gland.

Its subcellular location is the secreted. Potent anti-inflammatory agent. At low concentrations, mediates the degranulation of mast cells thus evoking an inflammatory response. Also acts as a neurotoxin capable of blocking a class of voltage-gated potassium channels. The chain is Mast cell degranulating peptide from Apis cerana cerana (Oriental honeybee).